A 145-amino-acid polypeptide reads, in one-letter code: 3-dehydroquinate dehydratase (145 aa).

The Proton acceptor role is filled by tyrosine 24. Residues asparagine 76, histidine 82, and aspartate 89 each contribute to the substrate site. Histidine 102 acts as the Proton donor in catalysis. Residues 103–104 (VS) and arginine 113 contribute to the substrate site.

It belongs to the type-II 3-dehydroquinase family. Homododecamer.

The enzyme catalyses 3-dehydroquinate = 3-dehydroshikimate + H2O. The protein operates within metabolic intermediate biosynthesis; chorismate biosynthesis; chorismate from D-erythrose 4-phosphate and phosphoenolpyruvate: step 3/7. Functionally, catalyzes a trans-dehydration via an enolate intermediate. In Janthinobacterium sp. (strain Marseille) (Minibacterium massiliensis), this protein is 3-dehydroquinate dehydratase.